A 620-amino-acid polypeptide reads, in one-letter code: 1-deoxy-D-xylulose-5-phosphate synthase (620 aa).

Residues H80 and 121–123 (GHS) each bind thiamine diphosphate. D152 is a binding site for Mg(2+). Thiamine diphosphate-binding positions include 153–154 (GA), N181, Y288, and E370. N181 provides a ligand contact to Mg(2+).

The protein belongs to the transketolase family. DXPS subfamily. As to quaternary structure, homodimer. Requires Mg(2+) as cofactor. It depends on thiamine diphosphate as a cofactor.

It catalyses the reaction D-glyceraldehyde 3-phosphate + pyruvate + H(+) = 1-deoxy-D-xylulose 5-phosphate + CO2. It participates in metabolic intermediate biosynthesis; 1-deoxy-D-xylulose 5-phosphate biosynthesis; 1-deoxy-D-xylulose 5-phosphate from D-glyceraldehyde 3-phosphate and pyruvate: step 1/1. Functionally, catalyzes the acyloin condensation reaction between C atoms 2 and 3 of pyruvate and glyceraldehyde 3-phosphate to yield 1-deoxy-D-xylulose-5-phosphate (DXP). The chain is 1-deoxy-D-xylulose-5-phosphate synthase from Cronobacter sakazakii (strain ATCC BAA-894) (Enterobacter sakazakii).